A 280-amino-acid polypeptide reads, in one-letter code: Cell envelope integrity protein EipB (280 aa).

A signal peptide spans 1 to 24 (MRFVRIAAAASGATVFMWAGFAGA). Cys-69 and Cys-278 are disulfide-bonded.

Monomer.

It is found in the periplasm. Functions in the periplasm to maintain cell envelope integrity. This chain is Cell envelope integrity protein EipB, found in Brucella abortus (strain 2308).